We begin with the raw amino-acid sequence, 231 residues long: Equistatin (231 aa).

Residues 1–32 form the signal peptide; it reads MALSQNQAKFSKGFVVMIWVLFIACAITSTEA. Thyroglobulin type-1 domains follow at residues 34-95, 102-163, and 167-231; these read LTKC…SPDC, LTLC…RPTC, and LSEC…RPTC. 9 disulfide bridges follow: C37–C56, C67–C74, C76–C95, C105–C124, C135–C142, C144–C163, C170–C191, C202–C209, and C211–C231.

The protein belongs to the protease inhibitor I31 family.

It is found in the secreted. In terms of biological role, potent inhibitor of papain-like cysteine proteinases (Ki=0.18-0.57 nM on papain), as well as of the aspartic proteinase cathepsin D (Ki=0.3-05 nM). In Actinia equina (Beadlet anemone), this protein is Equistatin.